We begin with the raw amino-acid sequence, 292 residues long: 4-hydroxy-tetrahydrodipicolinate synthase (292 aa).

Residue Thr44 participates in pyruvate binding. Tyr132 functions as the Proton donor/acceptor in the catalytic mechanism. The active-site Schiff-base intermediate with substrate is Lys161. A pyruvate-binding site is contributed by Ile203.

This sequence belongs to the DapA family. As to quaternary structure, homotetramer; dimer of dimers.

It localises to the cytoplasm. The catalysed reaction is L-aspartate 4-semialdehyde + pyruvate = (2S,4S)-4-hydroxy-2,3,4,5-tetrahydrodipicolinate + H2O + H(+). It functions in the pathway amino-acid biosynthesis; L-lysine biosynthesis via DAP pathway; (S)-tetrahydrodipicolinate from L-aspartate: step 3/4. Functionally, catalyzes the condensation of (S)-aspartate-beta-semialdehyde [(S)-ASA] and pyruvate to 4-hydroxy-tetrahydrodipicolinate (HTPA). This Fervidobacterium nodosum (strain ATCC 35602 / DSM 5306 / Rt17-B1) protein is 4-hydroxy-tetrahydrodipicolinate synthase.